A 170-amino-acid polypeptide reads, in one-letter code: Translocator protein 2 (170 aa).

The next 5 membrane-spanning stretches (helical) occupy residues 3-23 (LQGA…WLFT), 45-65 (VLLL…YLVW), 78-98 (LPLG…VLFF), 104-124 (GLAL…ALIW), and 130-150 (LAAL…ALTY).

The protein belongs to the TspO/BZRP family. As to quaternary structure, homotetramer. May also form homodimer. As to expression, expressed in erythrocytes (at protein level).

Its subcellular location is the endoplasmic reticulum membrane. The protein resides in the cell membrane. Cholesterol-binding protein involved in the redistribution of cholesterol from lipid droplets to the endoplasmic reticulum. Required to meet cholesterol demands during erythropoietic differentiation. May play a role in transport processes at the plasma membrane of erythrocytes, including regulating VDAC-mediated ATP export, and import of the heme precursors protoporphyrin IX and 5-aminolevulinic acid. This chain is Translocator protein 2 (TSPO2), found in Homo sapiens (Human).